A 348-amino-acid polypeptide reads, in one-letter code: Zinc transporter ZIP13 (348 aa).

Over 1–45 (MMIQTAVAQAKTAPAGPGPWSIKDLVDLQYLDELMSIDNLDVWFC) the chain is Cytoplasmic. Residues 46 to 66 (SLVGSIAIGLSGIFPLLVIPI) form a helical membrane-spanning segment. At 67–83 (EAGTALKTEAGCQKLKK) the chain is on the lumenal side. Residues 84–104 (LLSFAIGGLLGDVFLHLLPEA) traverse the membrane as a helical segment. Over 105-118 (WAYTSSPGGSHRHY) the chain is Cytoplasmic. A helical transmembrane segment spans residues 119 to 139 (CTQGLWVIGGLMSFLTLEKMF). The Lumenal portion of the chain corresponds to 140–219 (PDEVGDPETK…CIDNFTHGLA (80 aa)). A disordered region spans residues 144 to 192 (GDPETKTSFQRTTSSSSDLSSQFSVSPQTNGICSNNNSDSKPKTDISPY). Residues 149–169 (KTSFQRTTSSSSDLSSQFSVS) are compositionally biased toward low complexity. Residues 170 to 182 (PQTNGICSNNNSD) are compositionally biased toward polar residues. Residues 220-240 (VAGSFLVSRKVGFLTTFAILL) form a helical membrane-spanning segment. The XEXPHE-motif signature appears at 241–246 (HEIPHE). The Cytoplasmic portion of the chain corresponds to 241–262 (HEIPHEVGDFAILLRAGFDRWK). A helical transmembrane segment spans residues 263 to 283 (AARMQLSTALGGVLGACFALC). Residues 284-294 (SQSQHGAENAT) lie on the Lumenal side of the membrane. Residues 295-315 (TWILPFTSGGFLYIALVNVVP) form a helical membrane-spanning segment. The Cytoplasmic segment spans residues 316–326 (DLLEETNPRNS). A helical membrane pass occupies residues 327-347 (LLQVLLLFSGIGVMALLSIAM). Asp348 is a topological domain (lumenal).

This sequence belongs to the ZIP transporter (TC 2.A.5) family. As to quaternary structure, homodimer.

It is found in the golgi apparatus membrane. Its subcellular location is the cytoplasmic vesicle membrane. The protein resides in the endoplasmic reticulum membrane. It catalyses the reaction Zn(2+)(in) = Zn(2+)(out). In terms of biological role, functions as a zinc transporter transporting Zn(2+) from the Golgi apparatus to the cytosol and thus influences the zinc level at least in areas of the cytosol. This chain is Zinc transporter ZIP13, found in Danio rerio (Zebrafish).